The sequence spans 367 residues: MLDDFKIDPLVKNKSPSSTTVVVAMSGGVDSSVAAALLHKLGYKVIGITLQLYNNTSGKGGCCGSTDTQDAKQVASSMGFPHYTLNYEKAFREEVIENFIDTYTQGKTPIPCVKCNQVIKFRDLLNTTKSLGADVLVTGHYIRKVEQDDEIYVYSSKDTKKDQSYFLFATTIEQLKFLRFPLGNFHKDNIRKLAKYFNLSVAAKPDSQNICFVTDTYKNTIAHLRPQTVKKGHIIDTNGNILGEHNGIVNFTIGQRRGIGLASKEPLYVTKLNPDTNEVTVGPKSALLQNKLHIEDINWLLKDKIPYSGLSVKVKLRSSHSGSTAIIYPNDMNKATVILQDTYCTVTPGQACVVYDGDRMLGGGWIC.

ATP is bound by residues 24–31 (AMSGGVDS) and Leu-50. The Nucleophile role is filled by Cys-115. Cysteines 115 and 211 form a disulfide. Gly-139 is an ATP binding site. The interval 161–163 (KDQ) is interaction with tRNA. Catalysis depends on Cys-211, which acts as the Cysteine persulfide intermediate.

The protein belongs to the MnmA/TRMU family.

It localises to the cytoplasm. The enzyme catalyses S-sulfanyl-L-cysteinyl-[protein] + uridine(34) in tRNA + AH2 + ATP = 2-thiouridine(34) in tRNA + L-cysteinyl-[protein] + A + AMP + diphosphate + H(+). In terms of biological role, catalyzes the 2-thiolation of uridine at the wobble position (U34) of tRNA, leading to the formation of s(2)U34. This is tRNA-specific 2-thiouridylase MnmA from Ehrlichia canis (strain Jake).